The chain runs to 21 residues: Kassinatuerin-1 (21 aa).

Residue Ile-21 is modified to Isoleucine amide.

As to expression, expressed by the skin dorsal glands.

Its subcellular location is the secreted. Shows broad-spectrum antimicrobial activity against the Gram-negative bacterium E.coli (MIC=6.25 uM), K.pneumoniae (MIC=25 uM), E.cloacae (MIC=6.25 uM), P.aeruginosa (MIC=25 uM), the Gram-positive bacterium S.aureus (MIC=6.25 uM), S.epidermidis (MIC=6.25 uM), E.faecalis (MIC=12.5 uM), and the fungus C.albicans (MIC=100 uM). Has no antimicrobial effect against P.mirabilis (MIC&gt;100 uM). Has relatively high cytolytic and hemolytic activities. Its alpha-helix has considerable amphipathic character. This chain is Kassinatuerin-1, found in Kassina senegalensis (Senegal running frog).